The sequence spans 572 residues: Methionine--tRNA ligase (572 aa).

Residues 11–21 (PYINGIKHLGN) carry the 'HIGH' region motif. Residues Cys143, Cys146, Cys156, and Cys159 each contribute to the Zn(2+) site. The short motif at 346–350 (QFSTS) is the 'KMSKS' region element. Thr349 is a binding site for ATP.

The protein belongs to the class-I aminoacyl-tRNA synthetase family. MetG type 1 subfamily. Monomer. The cofactor is Zn(2+).

It localises to the cytoplasm. It carries out the reaction tRNA(Met) + L-methionine + ATP = L-methionyl-tRNA(Met) + AMP + diphosphate. In terms of biological role, is required not only for elongation of protein synthesis but also for the initiation of all mRNA translation through initiator tRNA(fMet) aminoacylation. This chain is Methionine--tRNA ligase, found in Roseobacter denitrificans (strain ATCC 33942 / OCh 114) (Erythrobacter sp. (strain OCh 114)).